Reading from the N-terminus, the 219-residue chain is Large ribosomal subunit protein uL16 (219 aa).

This sequence belongs to the universal ribosomal protein uL16 family. As to quaternary structure, component of the small ribosomal subunit. Mature ribosomes consist of a small (40S) and a large (60S) subunit. The 40S subunit contains about 33 different proteins and 1 molecule of RNA (18S). The 60S subunit contains about 49 different proteins and 3 molecules of RNA (25S, 5.8S and 5S).

This is Large ribosomal subunit protein uL16 (RPL10) from Encephalitozoon cuniculi (strain GB-M1) (Microsporidian parasite).